We begin with the raw amino-acid sequence, 234 residues long: Thymidylate kinase (234 aa).

Residue 11-18 coordinates ATP; that stretch reads GLEGSGKT.

It belongs to the thymidylate kinase family.

The enzyme catalyses dTMP + ATP = dTDP + ADP. Functionally, phosphorylation of dTMP to form dTDP in both de novo and salvage pathways of dTTP synthesis. This chain is Thymidylate kinase, found in Wigglesworthia glossinidia brevipalpis.